The following is a 171-amino-acid chain: Co-chaperone protein HscB homolog (171 aa).

In terms of domain architecture, J spans 2 to 74 (NHFELFGLPP…ISRAEYLLSQ (73 aa)).

It belongs to the HscB family. Interacts with HscA and stimulates its ATPase activity.

Functionally, co-chaperone involved in the maturation of iron-sulfur cluster-containing proteins. Seems to help targeting proteins to be folded toward HscA. In Vibrio vulnificus (strain YJ016), this protein is Co-chaperone protein HscB homolog.